The sequence spans 91 residues: Acylphosphatase (91 aa).

Positions 5 to 91 (CLHAYVGGRV…QGIAGFVVRR (87 aa)) constitute an Acylphosphatase-like domain. Catalysis depends on residues Arg-20 and Asn-38.

Belongs to the acylphosphatase family.

It carries out the reaction an acyl phosphate + H2O = a carboxylate + phosphate + H(+). The polypeptide is Acylphosphatase (acyP) (Pseudomonas aeruginosa (strain ATCC 15692 / DSM 22644 / CIP 104116 / JCM 14847 / LMG 12228 / 1C / PRS 101 / PAO1)).